Reading from the N-terminus, the 60-residue chain is Light-harvesting polypeptide B-885 alpha-2 chain (60 aa).

The Cytoplasmic segment spans residues 1–16; it reads SAPAQWKLWLVMDPRT. Residues 17–37 form a helical membrane-spanning segment; that stretch reads VMIGTAAWLGVLALLIHFLLL. Position 33 (His-33) interacts with a bacteriochlorophyll. The Periplasmic segment spans residues 38–60; sequence GTERFNWIDTGLKEQKATAAAQA.

Belongs to the antenna complex alpha subunit family. In terms of assembly, the core complex is formed by different alpha and beta chains, binding bacteriochlorophyll molecules, and arranged most probably in tetrameric structures disposed around the reaction center. The non-pigmented gamma chains may constitute additional components.

The protein resides in the cell inner membrane. Its function is as follows. Antenna complexes are light-harvesting systems, which transfer the excitation energy to the reaction centers. The sequence is that of Light-harvesting polypeptide B-885 alpha-2 chain from Rhodocyclus tenuis (Rhodospirillum tenue).